Consider the following 61-residue polypeptide: Alpha-conotoxin-like PnMGMR-02 (61 aa).

An N-terminal signal peptide occupies residues 1–21; sequence MGMRMMFTVFLLVVLATTVVS. Positions 22-44 are excised as a propeptide; it reads FTSDRASDGGNAAASDLIALTIK. Cystine bridges form between Cys-46-Cys-52 and Cys-47-Cys-60. A ser-Xaa-Pro motif, crucial for potent interaction with nAChR region spans residues 48-50; that stretch reads SRP. Residue Cys-60 is modified to Cysteine amide.

The protein belongs to the conotoxin A superfamily. Expressed by the venom duct.

It is found in the secreted. In terms of biological role, alpha-conotoxins act on postsynaptic membranes, they bind to the nicotinic acetylcholine receptors (nAChR) and thus inhibit them. This toxin blocks mammalian nAChRs (alpha-7 &gt; alpha-3/beta-2). In Conus pennaceus (Feathered cone), this protein is Alpha-conotoxin-like PnMGMR-02.